Reading from the N-terminus, the 311-residue chain is Methionyl-tRNA formyltransferase (311 aa).

110–113 (SLLP) contributes to the (6S)-5,6,7,8-tetrahydrofolate binding site.

The protein belongs to the Fmt family.

The enzyme catalyses L-methionyl-tRNA(fMet) + (6R)-10-formyltetrahydrofolate = N-formyl-L-methionyl-tRNA(fMet) + (6S)-5,6,7,8-tetrahydrofolate + H(+). Its function is as follows. Attaches a formyl group to the free amino group of methionyl-tRNA(fMet). The formyl group appears to play a dual role in the initiator identity of N-formylmethionyl-tRNA by promoting its recognition by IF2 and preventing the misappropriation of this tRNA by the elongation apparatus. This Streptococcus pneumoniae (strain Taiwan19F-14) protein is Methionyl-tRNA formyltransferase.